The primary structure comprises 274 residues: Undecaprenyl-diphosphatase 2 (274 aa).

6 consecutive transmembrane segments (helical) span residues 47–64 (VFVIVIQLGAILAVCWEY), 82–102 (WKFVTNLLIAFLPAVVLGLTF), 110–130 (LFSPVPVATAFIVGGLVILWA), 185–205 (ATEFSFFLAIPTLTAASLYDL), 219–239 (LMAVGFVVSFLSALVAVRGLI), and 249–269 (VFAWYRIAFGLVVLATAWSGL).

This sequence belongs to the UppP family.

Its subcellular location is the cell inner membrane. It catalyses the reaction di-trans,octa-cis-undecaprenyl diphosphate + H2O = di-trans,octa-cis-undecaprenyl phosphate + phosphate + H(+). Its function is as follows. Catalyzes the dephosphorylation of undecaprenyl diphosphate (UPP). Confers resistance to bacitracin. In Rhodospirillum rubrum (strain ATCC 11170 / ATH 1.1.1 / DSM 467 / LMG 4362 / NCIMB 8255 / S1), this protein is Undecaprenyl-diphosphatase 2.